The chain runs to 399 residues: Dual-specificity RNA methyltransferase RlmN (399 aa).

E122 (proton acceptor) is an active-site residue. The Radical SAM core domain maps to 128–371 (ETDRGTLCVS…VRTPRGRDIL (244 aa)). A disulfide bond links C135 and C374. [4Fe-4S] cluster-binding residues include C142, C146, and C149. S-adenosyl-L-methionine is bound by residues 200 to 201 (GE), S232, 254 to 256 (SLH), and N331. C374 serves as the catalytic S-methylcysteine intermediate.

It belongs to the radical SAM superfamily. RlmN family. [4Fe-4S] cluster serves as cofactor.

The protein localises to the cytoplasm. The catalysed reaction is adenosine(2503) in 23S rRNA + 2 reduced [2Fe-2S]-[ferredoxin] + 2 S-adenosyl-L-methionine = 2-methyladenosine(2503) in 23S rRNA + 5'-deoxyadenosine + L-methionine + 2 oxidized [2Fe-2S]-[ferredoxin] + S-adenosyl-L-homocysteine. It catalyses the reaction adenosine(37) in tRNA + 2 reduced [2Fe-2S]-[ferredoxin] + 2 S-adenosyl-L-methionine = 2-methyladenosine(37) in tRNA + 5'-deoxyadenosine + L-methionine + 2 oxidized [2Fe-2S]-[ferredoxin] + S-adenosyl-L-homocysteine. Its function is as follows. Specifically methylates position 2 of adenine 2503 in 23S rRNA and position 2 of adenine 37 in tRNAs. m2A2503 modification seems to play a crucial role in the proofreading step occurring at the peptidyl transferase center and thus would serve to optimize ribosomal fidelity. This chain is Dual-specificity RNA methyltransferase RlmN, found in Rhodopseudomonas palustris (strain TIE-1).